The sequence spans 99 residues: Nucleoid-associated protein SZO_16661 (99 aa).

The protein belongs to the YbaB/EbfC family. Homodimer.

Its subcellular location is the cytoplasm. The protein resides in the nucleoid. Functionally, binds to DNA and alters its conformation. May be involved in regulation of gene expression, nucleoid organization and DNA protection. This chain is Nucleoid-associated protein SZO_16661, found in Streptococcus equi subsp. zooepidemicus (strain H70).